Reading from the N-terminus, the 212-residue chain is GTP-binding nuclear protein Ran (212 aa).

In terms of domain architecture, Small GTPase Ran-type spans 3–167 (EKEQIKLVLV…VWLTSKLLGN (165 aa)). Position 14–21 (14–21 (DGGVGKTT)) interacts with GTP. Positions 33–41 (PRYIPTLGV) are switch-I. GTP contacts are provided by residues G64, 118–121 (NKVD), and 146–148 (SAK). The interval 64–80 (GQEKFGGLRDGYYIQGN) is switch-II.

This sequence belongs to the small GTPase superfamily. Ran family. As to quaternary structure, found in a nuclear export complex with RanGTP, exportin and pre-miRNA.

The protein resides in the nucleus. In terms of biological role, GTP-binding protein involved in nucleocytoplasmic transport. Required for the import of protein into the nucleus and also for RNA export. Involved in chromatin condensation and control of cell cycle. The protein is GTP-binding nuclear protein Ran (ranA) of Dictyostelium discoideum (Social amoeba).